A 707-amino-acid polypeptide reads, in one-letter code: Choline transporter-like protein 4 (707 aa).

Over 1–27 (MASEEYGEPAKHDPSFKGPIKKRGCTD) the chain is Cytoplasmic. The chain crosses the membrane as a helical span at residues 28–48 (IICCVLFMVFLLGYMVVGILA). Residues 49 to 225 (WLYGDPRQVI…KIFEDFAKSW (177 aa)) lie on the Extracellular side of the membrane. 5 N-linked (GlcNAc...) asparagine glycosylation sites follow: Asn-62, Asn-140, Asn-176, Asn-191, and Asn-196. A helical membrane pass occupies residues 226–246 (PWIITALVIAMVVSLLFLILL). The Cytoplasmic segment spans residues 247–249 (RFT). Residues 250 to 270 (AGILVWVLIVGVIGVIGYGIY) traverse the membrane as a helical segment. Residues 271–305 (HCYMEYDTLNKQGVSVSDVGFTFNLGVYFRVKETW) lie on the Extracellular side of the membrane. A helical membrane pass occupies residues 306–326 (LAILIVLAVVEAILLLVLLFL). The Cytoplasmic portion of the chain corresponds to 327 to 354 (RKRILIAIALIKEASKAIGHIMSSLFYP). The helical transmembrane segment at 355–375 (LVTFVLLVVCVAYWGMTALYL) threads the bilayer. At 376–442 (ATSGAPIYRI…TNLFNLQIYN (67 aa)) the chain is on the extracellular side. Asn-389, Asn-397, and Asn-401 each carry an N-linked (GlcNAc...) asparagine glycan. Residues 443-463 (VIGFLWCINFVIALGQCVLAG) form a helical membrane-spanning segment. Over 464–494 (AFASYYWAFHKPKDIPFFPVAESFMRTLRYH) the chain is Cytoplasmic. A helical transmembrane segment spans residues 495–515 (TGSLAFGSLILTIVQLIRIIL). Residues 516–556 (EYVDHKLKGAQNPCTRFLLCCLKCCFWCLEKFIKFLNRNAY) are Extracellular-facing. A helical membrane pass occupies residues 557-577 (IMIAVYGKNFCVSAKNAFKLL). At 578–593 (MRNIVRVVVLDKVTDL) the chain is on the cytoplasmic side. Residues 594-614 (LIFFGKLIVVGGVGVLAFFFF) traverse the membrane as a helical segment. At 615–633 (SGRIPIPNDSFKSPTLNYY) the chain is on the extracellular side. The N-linked (GlcNAc...) asparagine glycan is linked to Asn-622. A helical transmembrane segment spans residues 634 to 654 (WIPIITVVLGSYMIAHGFFSV). Over 655–707 (YNMCVDTLFLCFLEDLERNDGSQEKPYYMSKSLMSILNKKNRPPKSEEKKKKK) the chain is Cytoplasmic.

It belongs to the CTL (choline transporter-like) family.

The protein localises to the membrane. The protein resides in the apical cell membrane. It catalyses the reaction choline(out) + n H(+)(in) = choline(in) + n H(+)(out). The enzyme catalyses thiamine diphosphate(out) = thiamine diphosphate(in). Choline transporter that seems to play a role in the choline-acetylcholine system and is required to the efferent innervation of hair cells in the olivocochlear bundle for the maintenance of physiological function of outer hair cells and the protection of hair cells from acoustic injury. Also described as a thiamine pyrophosphate transporter. Functionally, also described as a thiamine pyrophosphate transporter. In Xenopus laevis (African clawed frog), this protein is Choline transporter-like protein 4 (slc44a4).